Reading from the N-terminus, the 278-residue chain is HTH-type transcriptional activator RhaS (278 aa).

The 99-residue stretch at 174-272 (NLLLAWLEDH…NWSPRDIRQG (99 aa)) folds into the HTH araC/xylS-type domain. 2 DNA-binding regions (H-T-H motif) span residues 191 to 212 (DAVA…KQKT) and 239 to 262 (VTDI…RREF).

Binds DNA as a dimer.

Its subcellular location is the cytoplasm. Its function is as follows. Activates expression of the rhaBAD and rhaT operons. This is HTH-type transcriptional activator RhaS from Escherichia coli O45:K1 (strain S88 / ExPEC).